The following is a 149-amino-acid chain: MNKALRQKKIRELVENNDVSGQQELLGMLEKEGFSVAQPTLSRDFAEMGIVRNRTADGGYRLSVPEEPQEDILRGLVGMEVLSITANETSIIINTLPGRAHGVGSFLDRINSPEILGTIAGDDTVLVIPATIRKISSVKSYIQKILSQP.

Belongs to the ArgR family.

The protein localises to the cytoplasm. The protein operates within amino-acid biosynthesis; L-arginine biosynthesis [regulation]. In terms of biological role, regulates arginine biosynthesis genes. In Chlorobaculum parvum (strain DSM 263 / NCIMB 8327) (Chlorobium vibrioforme subsp. thiosulfatophilum), this protein is Arginine repressor.